We begin with the raw amino-acid sequence, 557 residues long: Intraflagellar transport protein 56 (557 aa).

The disordered stretch occupies residues 1–30 (MLLSRMKPAVGGEASTSSNEKKRKNKSKKI). The span at 21 to 30 (KKRKNKSKKI) shows a compositional bias: basic residues. TPR repeat units follow at residues 60–93 (EHAD…PDCP), 95–128 (DVWV…LQNR), 154–187 (TEDQ…NREF), and 471–504 (ANDC…EGKR).

Belongs to the IFT56 family. Component of the IFT complex B.

It localises to the cell projection. The protein localises to the cilium. Component of the intraflagellar transport (IFT) complex B required for transport of proteins in the motile cilium. Required for transport of specific ciliary cargo proteins related to motility, while it is neither required for IFT complex B assembly or motion nor for cilium assembly. Plays a key role in maintaining the integrity of the IFT complex B and the proper ciliary localization of the IFT complex B components. Essential for maintaining proper microtubule organization within the ciliary axoneme. In Danio rerio (Zebrafish), this protein is Intraflagellar transport protein 56.